Here is a 99-residue protein sequence, read N- to C-terminus: MNQERVFKVLLGPHVSEKATVLADSKKQFVFKVATDATKLEIKKAVESLFDVKVAAVNTLNVQGKTKRTARGLGKRNDWKKAYIALQPGQDLDFSGSAE.

This sequence belongs to the universal ribosomal protein uL23 family. As to quaternary structure, part of the 50S ribosomal subunit. Contacts protein L29, and trigger factor when it is bound to the ribosome.

Functionally, one of the early assembly proteins it binds 23S rRNA. One of the proteins that surrounds the polypeptide exit tunnel on the outside of the ribosome. Forms the main docking site for trigger factor binding to the ribosome. This is Large ribosomal subunit protein uL23 from Stutzerimonas stutzeri (strain A1501) (Pseudomonas stutzeri).